Reading from the N-terminus, the 360-residue chain is MSKVAILGAGNLALTFAGDIARRLNEEVTAVIWAPTTNRRNFNEVRGIGTLELVGPDYEGAFTPQLEDDLEAAILDAEFIFLTVPTLAQEGILRELVKFDLSETVLIALPGSATSLTCKNILFPSHSPVAVIESTTSPYACRRIGERVHMLGVKACFEVAATSLLSNDLTSRFEALFPNRLQWYKDAASIFFSNTNPVVHPPGILVAKDAIENGMSPLPKFYREFVPAAIERVQELDNERLEIIAALGLESETGFTYSKKWYGGQATEWKEFFETYEGYAEVGTPTTMHHRYLTEDVKHIMVLWVQIAEVAGVQVPAMKSVIKEAGNVLYEDLFMTGRTLASMNLGGANPYRIVDALNGN.

The protein belongs to the lysopine/nopaline/octopine/opine/vitopine dehydrogenases family.

In Allorhizobium ampelinum (strain ATCC BAA-846 / DSM 112012 / S4) (Agrobacterium vitis (strain S4)), this protein is Vitopine synthase (vis).